The chain runs to 262 residues: Phosphonates import ATP-binding protein PhnC (262 aa).

In terms of domain architecture, ABC transporter spans 5–253 (IRVEKLAKTF…RFDHLYRSIN (249 aa)). Position 37–44 (37–44 (GPSGSGKS)) interacts with ATP.

It belongs to the ABC transporter superfamily. Phosphonates importer (TC 3.A.1.9.1) family. In terms of assembly, the complex is composed of two ATP-binding proteins (PhnC), two transmembrane proteins (PhnE) and a solute-binding protein (PhnD).

The protein resides in the cell inner membrane. It catalyses the reaction phosphonate(out) + ATP + H2O = phosphonate(in) + ADP + phosphate + H(+). Its function is as follows. Part of the ABC transporter complex PhnCDE involved in phosphonates import. Responsible for energy coupling to the transport system. The polypeptide is Phosphonates import ATP-binding protein PhnC (Shigella dysenteriae serotype 1 (strain Sd197)).